Consider the following 216-residue polypeptide: Probable nicotinate-nucleotide adenylyltransferase (216 aa).

Belongs to the NadD family.

The enzyme catalyses nicotinate beta-D-ribonucleotide + ATP + H(+) = deamido-NAD(+) + diphosphate. It participates in cofactor biosynthesis; NAD(+) biosynthesis; deamido-NAD(+) from nicotinate D-ribonucleotide: step 1/1. Functionally, catalyzes the reversible adenylation of nicotinate mononucleotide (NaMN) to nicotinic acid adenine dinucleotide (NaAD). The polypeptide is Probable nicotinate-nucleotide adenylyltransferase (Geobacillus thermodenitrificans (strain NG80-2)).